We begin with the raw amino-acid sequence, 414 residues long: uncharacterized protein (414 aa).

An N-terminal signal peptide occupies residues 1–16 (MRVILLLAFLISLTEC). Positions 20 to 59 (SEDLALYDLVEEVGVNFYEWFDIPRDASSNQVKKAYRKLT) constitute a Myb-like 1 domain. Residues 35 to 99 (NFYEWFDIPR…ELREKYDNVL (65 aa)) enclose the J domain. A helical transmembrane segment spans residues 125–145 (ILVLLFIGTIAHYLMMWAAYF). The segment at 211–234 (MTPKEVEPEEPTEEELAQQRRQQR) is disordered. A compositionally biased stretch (acidic residues) spans 217–226 (EPEEPTEEEL). The Myb-like 2 domain occupies 274–320 (AQKQSGATWTPDELASLVRLSTEKYPAGTPNRWEQMGRVLNRSAEDV). The 56-residue stretch at 352–407 (KSEDDWSQAEQKAFETALQKYPKGTDERWERISEEIGSKTKKQVMVRFKQLAEMIR) folds into the SANT domain.

It localises to the nucleus membrane. This is an uncharacterized protein from Caenorhabditis elegans.